A 246-amino-acid polypeptide reads, in one-letter code: Probable transcriptional regulatory protein KPK_1906 (246 aa).

It belongs to the TACO1 family.

The protein resides in the cytoplasm. The sequence is that of Probable transcriptional regulatory protein KPK_1906 from Klebsiella pneumoniae (strain 342).